A 525-amino-acid chain; its full sequence is AarF domain-containing protein kinase 1 (525 aa).

The Protein kinase domain maps to 148–477 (SFDDTPLGAA…HKKRDAGSFF (330 aa)). Residues 154 to 162 (LGAASLAQV) and Lys-176 each bind ATP. Residue Asp-308 is the Proton acceptor of the active site.

It belongs to the protein kinase superfamily. ADCK protein kinase family.

It localises to the mitochondrion. Its function is as follows. Appears to be essential for maintaining mitochondrial cristae formation and mitochondrial function by acting via YME1L1 in a kinase-independent manner to regulate essential mitochondrial structural proteins OPA1 and IMMT. The action of this enzyme is not yet clear. It is not known if it has protein kinase activity and what type of substrate it would phosphorylate (Ser, Thr or Tyr). This is AarF domain-containing protein kinase 1 (Adck1) from Mus musculus (Mouse).